Consider the following 557-residue polypeptide: UvrABC system protein C (557 aa).

Residues 14 to 89 form the GIY-YIG domain; sequence EEPGVYIFKN…IKKYRPKYNV (76 aa). One can recognise a UVR domain in the interval 194-229; that stretch reads EEVFDYLKEKMETHSRMLDFENAAKYRDLLLNLSNV.

It belongs to the UvrC family. As to quaternary structure, interacts with UvrB in an incision complex.

The protein resides in the cytoplasm. Functionally, the UvrABC repair system catalyzes the recognition and processing of DNA lesions. UvrC both incises the 5' and 3' sides of the lesion. The N-terminal half is responsible for the 3' incision and the C-terminal half is responsible for the 5' incision. This is UvrABC system protein C from Thermotoga petrophila (strain ATCC BAA-488 / DSM 13995 / JCM 10881 / RKU-1).